We begin with the raw amino-acid sequence, 477 residues long: Aspartyl/glutamyl-tRNA(Asn/Gln) amidotransferase subunit B (477 aa).

Belongs to the GatB/GatE family. GatB subfamily. Heterotrimer of A, B and C subunits.

The catalysed reaction is L-glutamyl-tRNA(Gln) + L-glutamine + ATP + H2O = L-glutaminyl-tRNA(Gln) + L-glutamate + ADP + phosphate + H(+). It catalyses the reaction L-aspartyl-tRNA(Asn) + L-glutamine + ATP + H2O = L-asparaginyl-tRNA(Asn) + L-glutamate + ADP + phosphate + 2 H(+). Functionally, allows the formation of correctly charged Asn-tRNA(Asn) or Gln-tRNA(Gln) through the transamidation of misacylated Asp-tRNA(Asn) or Glu-tRNA(Gln) in organisms which lack either or both of asparaginyl-tRNA or glutaminyl-tRNA synthetases. The reaction takes place in the presence of glutamine and ATP through an activated phospho-Asp-tRNA(Asn) or phospho-Glu-tRNA(Gln). The polypeptide is Aspartyl/glutamyl-tRNA(Asn/Gln) amidotransferase subunit B (Ligilactobacillus salivarius (strain UCC118) (Lactobacillus salivarius)).